The following is a 235-amino-acid chain: Transcription factor hepR (235 aa).

The disordered stretch occupies residues Gln14–Lys45. The C2H2-type zinc finger occupies Ile175–His205.

Its subcellular location is the nucleus. Its function is as follows. Transcription factor; part of the gene cluster that mediates the biosynthesis of heptelidic acid (HA), a sesquiterpene lactone that acts as an inhibitor of glyceraldehyde-3-phosphatedehydrogenase (GAPDH) and a growth inhibitor of the salt-tolerant lactic acid bacteria in soy sauce brewing. Both hepR and hepS regulate the transcription of the heptelidic acid cluster, but they are not involved in mutual transcriptional regulation and act with different mechanisms. This Aspergillus oryzae (strain ATCC 42149 / RIB 40) (Yellow koji mold) protein is Transcription factor hepR.